A 311-amino-acid polypeptide reads, in one-letter code: Aquaporin NIP3-1 (311 aa).

Residues 1–34 (MEMAAPNGGGAAGMSSPVNGASAPATPGTPAPLF) form a disordered region. Over residues 20 to 34 (GASAPATPGTPAPLF) the composition is skewed to low complexity. A run of 2 helical transmembrane segments spans residues 85–105 (LGAE…APIV) and 111–131 (GAIS…TIIL). Residues 142–144 (NPS) carry the NPA 1 motif. Helical transmembrane passes span 158-178 (LQVP…GFAL), 202-222 (AFFT…AVAT), and 226-246 (AVGE…ILIA). Residues 255–257 (NPV) carry the NPA 2 motif. A helical membrane pass occupies residues 273–293 (WIYLIAPTLGAVAGAGVYTAV).

It belongs to the MIP/aquaporin (TC 1.A.8) family. NIP (TC 1.A.8.12) subfamily. As to expression, expressed in roots and leaves.

The protein resides in the membrane. Its function is as follows. Aquaporins facilitate the transport of water and small neutral solutes across cell membranes. This Oryza sativa subsp. japonica (Rice) protein is Aquaporin NIP3-1 (NIP3-1).